Here is a 230-residue protein sequence, read N- to C-terminus: MKIEAITGSEAEAFHRMGSQASHRYDEFVDLLVGAGIADGQTVVDLCCGSGELEVILSSRFPSLNLVGVDLSEDMVRIAREYAAEQGKALEFRHGDAQLLAGMEDLAGKADLVVSRNAFHRLTRLPAAFDTMLRLAKPGGAVLNCSFIHPSDFDESGFRAWVTFLNQRPWDSEMQIVWALAHHYAPRLDDYREALAQAARETPVSEQRVWIDDQGYGVPTVKCFARRAAA.

This sequence belongs to the methyltransferase superfamily.

The enzyme catalyses 8-desmethylnovobiocic acid + S-adenosyl-L-methionine = novobiocic acid + S-adenosyl-L-homocysteine + H(+). Its pathway is antibiotic biosynthesis; novobiocin biosynthesis. Functionally, C-methyltransferase that methylates 8-demethylnovobiocic acid to produce novobiocic acid in the novobiocin biosynthesis pathway. Novobiocin is an aminocoumarin family antibiotic that targets bacterial DNA gyrases. This Streptomyces niveus (Streptomyces spheroides) protein is 8-demethylnovobiocic acid C(8)-methyltransferase (novO).